Consider the following 1180-residue polypeptide: Pyruvate carboxylase 2 (1180 aa).

The residue at position 2 (Ser-2) is an N-acetylserine. The region spanning Glu-19–Gln-471 is the Biotin carboxylation domain. Lys-137, Glu-221, and His-256 together coordinate ATP. Residues Arg-141–Ala-338 enclose the ATP-grasp domain. The active site involves Arg-313. The Pyruvate carboxyltransferase domain maps to Thr-558–Arg-825. Substrate is bound by residues Arg-566–Gln-570 and Arg-639. An a divalent metal cation-binding site is contributed by Asp-567. A divalent metal cation contacts are provided by Lys-735, His-765, and His-767. N6-carboxylysine is present on Lys-735. Thr-899 provides a ligand contact to substrate. In terms of domain architecture, Biotinyl-binding spans Lys-1095–Glu-1170. An N6-biotinyllysine modification is found at Lys-1136.

In terms of assembly, homotetramer. Biotin serves as cofactor. Zn(2+) is required as a cofactor.

The protein localises to the cytoplasm. The enzyme catalyses hydrogencarbonate + pyruvate + ATP = oxaloacetate + ADP + phosphate + H(+). It functions in the pathway carbohydrate biosynthesis; gluconeogenesis. Pyruvate carboxylase catalyzes a 2-step reaction, involving the ATP-dependent carboxylation of the covalently attached biotin in the first step and the transfer of the carboxyl group to pyruvate in the second. The polypeptide is Pyruvate carboxylase 2 (PYC2) (Saccharomyces cerevisiae (strain ATCC 204508 / S288c) (Baker's yeast)).